The sequence spans 367 residues: Uracil nucleotide/cysteinyl leukotriene receptor (367 aa).

The disordered stretch occupies residues 1-28 (MSKRSWWAGSRKPPREMLKLSGSDSSQS). Topologically, residues 1–64 (MSKRSWWAGS…TPLENMLFAS (64 aa)) are extracellular. N42 is a glycosylation site (N-linked (GlcNAc...) asparagine). Residues 65–85 (FYLLDFILALVGNTLALWLFI) form a helical membrane-spanning segment. At 86–92 (RDHKSGT) the chain is on the cytoplasmic side. A helical membrane pass occupies residues 93–113 (PANVFLMHLAVADLSCVLVLP). Residues 114–133 (TRLVYHFSGNHWPFGEIACR) are Extracellular-facing. C132 and C209 are oxidised to a cystine. A helical transmembrane segment spans residues 134–154 (LTGFLFYLNMYASIYFLTCIS). Over 155–175 (ADRFLAIVHPVKSLKLRRPLY) the chain is Cytoplasmic. A helical membrane pass occupies residues 176-196 (AHLACAFLWVVVAVAMAPLLV). Topologically, residues 197–223 (SPQTVQTNHTVVCLQLYREKASHHALV) are extracellular. An N-linked (GlcNAc...) asparagine glycan is attached at N204. A helical membrane pass occupies residues 224-244 (SLAVAFTFPFITTVTCYLLII). Topologically, residues 245–260 (RSLRQGLRVEKRLKTK) are cytoplasmic. Residues 261 to 281 (AVRMIAIVLAIFLVCFVPYHV) form a helical membrane-spanning segment. A glycan (N-linked (GlcNAc...) asparagine) is linked at N282. Residues 282–308 (NRSVYVLHYRSHGASCATQRILALANR) lie on the Extracellular side of the membrane. A helical membrane pass occupies residues 309–329 (ITSCLTSLNGALDPIMYFFVA). Residues 330–367 (EKFRHALCNLLCGKRLKGPPPSFEGKTNESSLSAKSEL) lie on the Cytoplasmic side of the membrane.

This sequence belongs to the G-protein coupled receptor 1 family. Expressed in brain, kidney, heart and umbilical vein endothelial cells. Highest level in brain.

Its subcellular location is the cell membrane. Its function is as follows. Dual specificity receptor for uracil nucleotides and cysteinyl leukotrienes (CysLTs). Signals through G(i) and inhibition of adenylyl cyclase. May mediate brain damage by nucleotides and CysLTs following ischemia. In Homo sapiens (Human), this protein is Uracil nucleotide/cysteinyl leukotriene receptor (GPR17).